The chain runs to 152 residues: Ribosome maturation factor RimP (152 aa).

The protein belongs to the RimP family.

The protein localises to the cytoplasm. Functionally, required for maturation of 30S ribosomal subunits. The protein is Ribosome maturation factor RimP of Photorhabdus laumondii subsp. laumondii (strain DSM 15139 / CIP 105565 / TT01) (Photorhabdus luminescens subsp. laumondii).